The primary structure comprises 245 residues: tRNA1(Val) (adenine(37)-N6)-methyltransferase (245 aa).

It belongs to the methyltransferase superfamily. tRNA (adenine-N(6)-)-methyltransferase family.

It localises to the cytoplasm. The catalysed reaction is adenosine(37) in tRNA1(Val) + S-adenosyl-L-methionine = N(6)-methyladenosine(37) in tRNA1(Val) + S-adenosyl-L-homocysteine + H(+). Specifically methylates the adenine in position 37 of tRNA(1)(Val) (anticodon cmo5UAC). In Erwinia tasmaniensis (strain DSM 17950 / CFBP 7177 / CIP 109463 / NCPPB 4357 / Et1/99), this protein is tRNA1(Val) (adenine(37)-N6)-methyltransferase.